The sequence spans 633 residues: Chaperone protein dnaK2 (633 aa).

Threonine 196 bears the Phosphothreonine; by autocatalysis mark. A disordered region spans residues 600 to 633 (ATADGGPAQHAATGGPTSGGGGGDDVIDAEFDKG). A compositionally biased stretch (acidic residues) spans 624-633 (DVIDAEFDKG).

Belongs to the heat shock protein 70 family.

In terms of biological role, acts as a chaperone. This Streptomyces avermitilis (strain ATCC 31267 / DSM 46492 / JCM 5070 / NBRC 14893 / NCIMB 12804 / NRRL 8165 / MA-4680) protein is Chaperone protein dnaK2 (dnaK2).